Consider the following 215-residue polypeptide: Small ribosomal subunit protein uS5 (215 aa).

Residues 1–62 (MTDSSPQSNP…QERDSEWQER (62 aa)) are disordered. A compositionally biased stretch (low complexity) spans 9–28 (NPNAVPGAADVPAAAEGQQQ). Over residues 29–61 (EQRRGGGRGERGDRRGGRRGDRRNQERDSEWQE) the composition is skewed to basic and acidic residues. The S5 DRBM domain occupies 59-122 (WQERVVQIRR…ADGKKHLVKV (64 aa)).

It belongs to the universal ribosomal protein uS5 family. Part of the 30S ribosomal subunit. Contacts proteins S4 and S8.

In terms of biological role, with S4 and S12 plays an important role in translational accuracy. Functionally, located at the back of the 30S subunit body where it stabilizes the conformation of the head with respect to the body. The chain is Small ribosomal subunit protein uS5 from Parasynechococcus marenigrum (strain WH8102).